The primary structure comprises 587 residues: Folylpolyglutamate synthase, mitochondrial (587 aa).

A mitochondrion-targeting transit peptide spans 1-42 (MSWARTHLRSALSLAAVSARGATTEGAARRWLSAWPAPQEPG). An ATP-binding site is contributed by 106-109 (GKGS). Positions 130, 200, and 228 each coordinate Mg(2+). ATP is bound by residues R363 and D377. The tract at residues 484–508 (PDFLSSPSPEPGRPGSLQPALRPPH) is disordered. A Phosphoserine modification is found at S539.

Belongs to the folylpolyglutamate synthase family. As to quaternary structure, monomer. A monovalent cation is required as a cofactor.

It localises to the mitochondrion inner membrane. It is found in the mitochondrion matrix. The protein resides in the cytoplasm. The catalysed reaction is (6S)-5,6,7,8-tetrahydrofolyl-(gamma-L-Glu)(n) + L-glutamate + ATP = (6S)-5,6,7,8-tetrahydrofolyl-(gamma-L-Glu)(n+1) + ADP + phosphate + H(+). The protein operates within cofactor biosynthesis; tetrahydrofolylpolyglutamate biosynthesis. Catalyzes conversion of folates to polyglutamate derivatives allowing concentration of folate compounds in the cell and the intracellular retention of these cofactors, which are important substrates for most of the folate-dependent enzymes that are involved in one-carbon transfer reactions involved in purine, pyrimidine and amino acid synthesis. The polypeptide is Folylpolyglutamate synthase, mitochondrial (FPGS) (Cricetulus griseus (Chinese hamster)).